A 162-amino-acid chain; its full sequence is MNGVAAIAKGMATTLKVLFRKPVTVDYPYVKRPRAPRFRGRHELRTYENGLEMCVGCELCQVACPAAAITVQAAENDPDNPHSPGERYGYKYQVDLLRCIFCGMCEEACPTDCLHLTQEFELADFTRESLILQKEQLVNRNPSGFKVPMNVYPPFRRKAVNA.

2 consecutive 4Fe-4S ferredoxin-type domains span residues 44–74 (LRTYENGLEMCVGCELCQVACPAAAITVQAA) and 90–119 (YKYQVDLLRCIFCGMCEEACPTDCLHLTQE). [4Fe-4S] cluster is bound by residues cysteine 54, cysteine 57, cysteine 60, cysteine 64, cysteine 99, cysteine 102, cysteine 105, and cysteine 109.

This sequence belongs to the complex I 23 kDa subunit family. In terms of assembly, NDH-1 is composed of 14 different subunits. Subunits NuoA, H, J, K, L, M, N constitute the membrane sector of the complex. It depends on [4Fe-4S] cluster as a cofactor.

It localises to the cell membrane. The catalysed reaction is a quinone + NADH + 5 H(+)(in) = a quinol + NAD(+) + 4 H(+)(out). Its function is as follows. NDH-1 shuttles electrons from NADH, via FMN and iron-sulfur (Fe-S) centers, to quinones in the respiratory chain. The immediate electron acceptor for the enzyme in this species is believed to be ubiquinone. Couples the redox reaction to proton translocation (for every two electrons transferred, four hydrogen ions are translocated across the cytoplasmic membrane), and thus conserves the redox energy in a proton gradient. The polypeptide is NADH-quinone oxidoreductase subunit I 1 (Symbiobacterium thermophilum (strain DSM 24528 / JCM 14929 / IAM 14863 / T)).